Here is a 501-residue protein sequence, read N- to C-terminus: Glycogen synthase 1 (501 aa).

ADP-alpha-D-glucose is bound at residue Lys18.

The protein belongs to the glycosyltransferase 1 family. Bacterial/plant glycogen synthase subfamily.

It catalyses the reaction [(1-&gt;4)-alpha-D-glucosyl](n) + ADP-alpha-D-glucose = [(1-&gt;4)-alpha-D-glucosyl](n+1) + ADP + H(+). It participates in glycan biosynthesis; glycogen biosynthesis. Functionally, synthesizes alpha-1,4-glucan chains using ADP-glucose. In Geobacter sulfurreducens (strain ATCC 51573 / DSM 12127 / PCA), this protein is Glycogen synthase 1.